The primary structure comprises 122 residues: Large ribosomal subunit protein uL14 (122 aa).

It belongs to the universal ribosomal protein uL14 family. In terms of assembly, part of the 50S ribosomal subunit. Forms a cluster with proteins L3 and L19. In the 70S ribosome, L14 and L19 interact and together make contacts with the 16S rRNA in bridges B5 and B8.

Functionally, binds to 23S rRNA. Forms part of two intersubunit bridges in the 70S ribosome. The chain is Large ribosomal subunit protein uL14 from Sorangium cellulosum (strain So ce56) (Polyangium cellulosum (strain So ce56)).